Reading from the N-terminus, the 505-residue chain is Lysine--tRNA ligase (505 aa).

The Mg(2+) site is built by glutamate 415 and glutamate 422.

The protein belongs to the class-II aminoacyl-tRNA synthetase family. Homodimer. Requires Mg(2+) as cofactor.

It is found in the cytoplasm. It carries out the reaction tRNA(Lys) + L-lysine + ATP = L-lysyl-tRNA(Lys) + AMP + diphosphate. In Shigella boydii serotype 4 (strain Sb227), this protein is Lysine--tRNA ligase.